We begin with the raw amino-acid sequence, 646 residues long: Acetyl-coenzyme A synthetase (646 aa).

Residues 189–192 (RGPK), Thr-307, and Asn-331 each bind CoA. Residues 383–385 (GEP), 407–412 (DTWWQT), Asp-496, and Arg-511 each bind ATP. Ser-519 contributes to the CoA binding site. Arg-522 provides a ligand contact to ATP. 3 residues coordinate Mg(2+): Val-533, His-535, and Val-538. Arg-580 is a binding site for CoA. Lys-605 is modified (N6-acetyllysine).

Belongs to the ATP-dependent AMP-binding enzyme family. Mg(2+) serves as cofactor. Post-translationally, acetylated. Deacetylation by the SIR2-homolog deacetylase activates the enzyme.

It carries out the reaction acetate + ATP + CoA = acetyl-CoA + AMP + diphosphate. Catalyzes the conversion of acetate into acetyl-CoA (AcCoA), an essential intermediate at the junction of anabolic and catabolic pathways. AcsA undergoes a two-step reaction. In the first half reaction, AcsA combines acetate with ATP to form acetyl-adenylate (AcAMP) intermediate. In the second half reaction, it can then transfer the acetyl group from AcAMP to the sulfhydryl group of CoA, forming the product AcCoA. This chain is Acetyl-coenzyme A synthetase, found in Desulfatibacillum aliphaticivorans.